The chain runs to 640 residues: MPVSLTPNAITAIHDGDVNLKPLLQVLEIKMIGRSQERSQERYRFLISDGVSAQHAMVAVQLNDRVKSGQFEKGSIVQLIDYICSDVKGRKLIVVLNMETIVQQSETIGNPTIFGETDTEAQKTFSGTGNIPPPNRVVFNEPMVQHSVNRAPPRGVNIQNQANNTPSFRPSVQPSYQPPASYRNHGPIMKNEAPARVIPIAALNPYQGRWAIKARVTAKGDIRRYNNAKGDGKVFSFDLLDYDGGEIRVTCFNALVDRFYDVTEVGKVYLISKGSLKPAQKNFNHLKNEWEIFLESTSTVELCPDEDGSIPKQQFSFRPISDIENAENNTILDVIGVVTSVNPSVPILRKNGMETHRRILNLKDESGKAVEVTLWGEFCNRDGRQLEEMVDSAFHPVLAIKAGKVSDFSGKSVGTISSTQLFINPDFPEAHKLRTWFDYGGKDTASFSISRDTMPGGVSRNEIRKNVSQIKEEGLGRSDKPDWITVKATISFIKTDSFCYTACPLMIGDKQCNKKVTRSGTNRWLCDRCNQESDECDYRYLLQVQIQDHTGLTWITAFQETGEEIMGCPAKKLYAMKYELEKEEEFAEIVRDRLFHQYMLKLKIKEESYGDEQRVKMTVVKVDKVNYTSESKYMLDLLVR.

A DNA-binding region (OB) is located at residues 211–293 (AIKARVTAKG…NHLKNEWEIF (83 aa)). A C4-type zinc finger spans residues 503 to 529 (CPLMIGDKQCNKKVTRSGTNRWLCDRC).

The protein belongs to the replication factor A protein 1 family. As to quaternary structure, heterotrimer of RPA1, RPA2 and RPA3 (canonical replication protein A complex). Interacts with RPA2A. Expressed in roots, leaves, stalks and flower buds.

The protein localises to the nucleus. In terms of biological role, component of the replication protein A complex (RPA) required for DNA recombination, repair and replication. The activity of RPA is mediated by single-stranded DNA binding and protein interactions. Plays an essential role at later stages of meiotic recombination events required for the formation of class I crossovers. Is essential for normal progression through meiosis in pollen mother cells. Is involved in repair of double-strand DNA breaks (DSBs) induced by genotoxic stresses, but does not seem to be required for the repair of meiotic DSBs. The sequence is that of Replication protein A 70 kDa DNA-binding subunit A (RPA1A) from Arabidopsis thaliana (Mouse-ear cress).